The sequence spans 294 residues: Ribosomal RNA small subunit methyltransferase I (294 aa).

Belongs to the methyltransferase superfamily. RsmI family.

The protein resides in the cytoplasm. It catalyses the reaction cytidine(1402) in 16S rRNA + S-adenosyl-L-methionine = 2'-O-methylcytidine(1402) in 16S rRNA + S-adenosyl-L-homocysteine + H(+). In terms of biological role, catalyzes the 2'-O-methylation of the ribose of cytidine 1402 (C1402) in 16S rRNA. The chain is Ribosomal RNA small subunit methyltransferase I from Mesorhizobium japonicum (strain LMG 29417 / CECT 9101 / MAFF 303099) (Mesorhizobium loti (strain MAFF 303099)).